A 150-amino-acid polypeptide reads, in one-letter code: 3-hydroxyacyl-[acyl-carrier-protein] dehydratase FabZ (150 aa).

His54 is an active-site residue.

The protein belongs to the thioester dehydratase family. FabZ subfamily.

The protein resides in the cytoplasm. The enzyme catalyses a (3R)-hydroxyacyl-[ACP] = a (2E)-enoyl-[ACP] + H2O. Its function is as follows. Involved in unsaturated fatty acids biosynthesis. Catalyzes the dehydration of short chain beta-hydroxyacyl-ACPs and long chain saturated and unsaturated beta-hydroxyacyl-ACPs. This is 3-hydroxyacyl-[acyl-carrier-protein] dehydratase FabZ from Psychromonas ingrahamii (strain DSM 17664 / CCUG 51855 / 37).